Reading from the N-terminus, the 294-residue chain is 4-hydroxy-tetrahydrodipicolinate synthase (294 aa).

Residue Thr45 participates in pyruvate binding. Tyr133 acts as the Proton donor/acceptor in catalysis. Lys161 functions as the Schiff-base intermediate with substrate in the catalytic mechanism. Residue Ile203 participates in pyruvate binding.

This sequence belongs to the DapA family. Homotetramer; dimer of dimers.

Its subcellular location is the cytoplasm. It carries out the reaction L-aspartate 4-semialdehyde + pyruvate = (2S,4S)-4-hydroxy-2,3,4,5-tetrahydrodipicolinate + H2O + H(+). It functions in the pathway amino-acid biosynthesis; L-lysine biosynthesis via DAP pathway; (S)-tetrahydrodipicolinate from L-aspartate: step 3/4. Functionally, catalyzes the condensation of (S)-aspartate-beta-semialdehyde [(S)-ASA] and pyruvate to 4-hydroxy-tetrahydrodipicolinate (HTPA). The chain is 4-hydroxy-tetrahydrodipicolinate synthase from Thioalkalivibrio sulfidiphilus (strain HL-EbGR7).